Consider the following 489-residue polypeptide: DNA-dependent metalloprotease SPRTN (489 aa).

The residue at position 1 (methionine 1) is an N-acetylmethionine. A SprT-like domain is found at 45 to 212 (LQALFVQFND…KTCGGTYIKI (168 aa)). Histidine 111 is a binding site for Zn(2+). Glutamate 112 is a catalytic residue. 2 residues coordinate Zn(2+): histidine 115 and histidine 130. Position 230 is an N6-acetyllysine (lysine 230). The short motif at 253–261 (FSGKGYVLG) is the SHP-box element. Serine 268 is modified (phosphoserine). Lysine 303 is covalently cross-linked (Glycyl lysine isopeptide (Lys-Gly) (interchain with G-Cter in SUMO2)). Residues 325–332 (QNVLSNYF) carry the PIP-box motif. Lysine 341 is covalently cross-linked (Glycyl lysine isopeptide (Lys-Gly) (interchain with G-Cter in SUMO2); alternate). Lysine 341 is covalently cross-linked (Glycyl lysine isopeptide (Lys-Gly) (interchain with G-Cter in ubiquitin); alternate). The tract at residues 357 to 409 (GNIPKNSVSSSSQRRVSSSKISLRNSSKVTESASVMPSQDVSGSEDTFPNKRP) is disordered. Residue lysine 361 forms a Glycyl lysine isopeptide (Lys-Gly) (interchain with G-Cter in SUMO2) linkage. Residues 363–383 (SVSSSSQRRVSSSKISLRNSS) show a composition bias toward low complexity. Phosphoserine; by CHEK1 occurs at positions 373 and 374. A Glycyl lysine isopeptide (Lys-Gly) (interchain with G-Cter in SUMO2); alternate cross-link involves residue lysine 376. A Glycyl lysine isopeptide (Lys-Gly) (interchain with G-Cter in ubiquitin); alternate cross-link involves residue lysine 376. Serine 383 is subject to Phosphoserine; by CHEK1. Over residues 384–403 (KVTESASVMPSQDVSGSEDT) the composition is skewed to polar residues. Residues 402-413 (DTFPNKRPRLED) carry the Nuclear localization signal motif. A Glycyl lysine isopeptide (Lys-Gly) (interchain with G-Cter in ubiquitin) cross-link involves residue lysine 414. Glycyl lysine isopeptide (Lys-Gly) (interchain with G-Cter in SUMO2) cross-links involve residues lysine 423 and lysine 424. The disordered stretch occupies residues 428-453 (KSSGNDPKYSTTTAQNSSSSSSQSKM). Lysine 435 participates in a covalent cross-link: Glycyl lysine isopeptide (Lys-Gly) (interchain with G-Cter in ubiquitin). Residues 437–451 (STTTAQNSSSSSSQS) are compositionally biased toward low complexity. A UBZ4-type zinc finger spans residues 453–480 (MVNCPVCQNEVLESQINEHLDWCLEGDS). Residues cysteine 456, cysteine 459, histidine 471, and cysteine 475 each coordinate Zn(2+). Lysine 484 is covalently cross-linked (Glycyl lysine isopeptide (Lys-Gly) (interchain with G-Cter in SUMO2)).

It belongs to the Spartan family. In terms of assembly, homodimer. Interacts (VIA PIP-box) with PCNA (when ubiquitinated). Interacts (via its SHP-box) with VCP/p97. Interacts with RAD18. Interacts with KCTD13 and POLD3. The cofactor is Zn(2+). In terms of processing, autocatalytically cleaved in response to double-stranded DNA-binding: autocatalytic cleavage takes place in trans and leads to inactivation. Post-translationally, monoubiquitinated; monoubiquitination promotes exclusion from chromatin. Deubiquitinated by VCPIP1: deubiquitination is required for subsequent acetylation and recruitment to chromatin and DNA damage sites. Acetylated following deubiquitination by VCPIP1, leading to recruitment to chromatin and DNA damage sites. In terms of processing, phosphorylation by CHEK1 promotes recruitment to chromatin.

Its subcellular location is the nucleus. The protein resides in the chromosome. With respect to regulation, DNA-binding activates the protease activity: single-stranded DNA-binding specifically activates ability to cleave covalent DNA-protein cross-links (DPCs). In contrast, double-stranded DNA-binding specifically activates autocatalytic cleavage, and subsequent inactivation. In terms of biological role, DNA-dependent metalloendopeptidase that mediates the proteolytic cleavage of covalent DNA-protein cross-links (DPCs) during DNA synthesis, thereby playing a key role in maintaining genomic integrity. DPCs are highly toxic DNA lesions that interfere with essential chromatin transactions, such as replication and transcription, and which are induced by reactive agents, such as UV light or formaldehyde. Associates with the DNA replication machinery and specifically removes DPCs during DNA synthesis. Catalyzes proteolytic cleavage of the HMCES DNA-protein cross-link following unfolding by the BRIP1/FANCJ helicase. Acts as a pleiotropic protease for DNA-binding proteins cross-linked with DNA, such as TOP1, TOP2A, histones H3 and H4. Mediates degradation of DPCs that are not ubiquitinated, while it is not able to degrade ubiquitinated DPCs. SPRTN activation requires polymerase collision with DPCs followed by helicase bypass of DPCs. Involved in recruitment of VCP/p97 to sites of DNA damage. Also acts as an activator of CHEK1 during normal DNA replication by mediating proteolytic cleavage of CHEK1, thereby promoting CHEK1 removal from chromatin and subsequent activation. Does not activate CHEK1 in response to DNA damage. May also act as a 'reader' of ubiquitinated PCNA: recruited to sites of UV damage and interacts with ubiquitinated PCNA and RAD18, the E3 ubiquitin ligase that monoubiquitinates PCNA. Facilitates chromatin association of RAD18 and is required for efficient PCNA monoubiquitination, promoting a feed-forward loop to enhance PCNA ubiquitination and translesion DNA synthesis. This chain is DNA-dependent metalloprotease SPRTN, found in Homo sapiens (Human).